A 519-amino-acid polypeptide reads, in one-letter code: Probable cytosol aminopeptidase (519 aa).

2 residues coordinate Mn(2+): K283 and D288. Residue K295 is part of the active site. Positions 306, 365, and 367 each coordinate Mn(2+). Residue R369 is part of the active site.

Belongs to the peptidase M17 family. Requires Mn(2+) as cofactor.

It is found in the cytoplasm. It carries out the reaction Release of an N-terminal amino acid, Xaa-|-Yaa-, in which Xaa is preferably Leu, but may be other amino acids including Pro although not Arg or Lys, and Yaa may be Pro. Amino acid amides and methyl esters are also readily hydrolyzed, but rates on arylamides are exceedingly low.. It catalyses the reaction Release of an N-terminal amino acid, preferentially leucine, but not glutamic or aspartic acids.. Presumably involved in the processing and regular turnover of intracellular proteins. Catalyzes the removal of unsubstituted N-terminal amino acids from various peptides. The polypeptide is Probable cytosol aminopeptidase (Mycobacterium marinum (strain ATCC BAA-535 / M)).